The sequence spans 470 residues: Nuclear receptor subfamily 0 group B member 1 (470 aa).

3 consecutive repeat copies span residues 1 to 67 (MAGE…YRCC), 68 to 133 (FCGK…YRCC), and 134 to 200 (FCGE…YRCC). Residues 1–253 (MAGENHQWQG…RPVALKNPQV (253 aa)) are 4 X 67 AA tandem repeats. Short sequence motifs (LXXLL motif) lie at residues 13-17 (LYNML), 80-84 (LYSML), and 146-150 (LYSLL). One copy of the 4; truncated repeat lies at 201-253 (FCGEDHPQQGSTLYCMPTSTNQAQAAPEERPRAPWWDTSSGALRPVALKNPQV). Residues 205 to 469 (DHPQQGSTLY…DMMLEMLCTK (265 aa)) enclose the NR LBD domain. The AF-2 motif motif lies at 461–466 (MMLEML).

Belongs to the nuclear hormone receptor family. NR0 subfamily. Homodimer. Interacts with NR5A1, NR5A2, NR0B2 and with COPS2. Interacts with ESRRB; represses ESRRB activity at the GATA6 promoter.

It localises to the nucleus. The protein localises to the cytoplasm. Nuclear receptor that lacks a DNA-binding domain and acts as a corepressor that inhibits the transcriptional activity of other nuclear receptors through heterodimeric interactions. Component of a cascade required for the development of the hypothalamic-pituitary-adrenal-gonadal axis. May also have a role in the development of the embryo and in the maintenance of embryonic stem cell pluripotency. In Macaca mulatta (Rhesus macaque), this protein is Nuclear receptor subfamily 0 group B member 1 (NR0B1).